A 73-amino-acid polypeptide reads, in one-letter code: Protein WFDC10B (73 aa).

The signal sequence occupies residues 1–21 (MAPQTLLLVLVLCVLLLQAQG). Residues 28–73 (RMQRIKVCEKRPSIDLCIHHCSYFQKCETNKICCSAFCGNICMSIL) form the WAP domain.

Ubiquitously expressed.

The protein resides in the secreted. This Homo sapiens (Human) protein is Protein WFDC10B (WFDC10B).